The chain runs to 285 residues: MDLWFSESHTPDVKLSVRTEEQLFVGKSEWQDISVINTPSFGKMLILNGHVLFSDADNFVYNEMVVHVPMAVHPNPEKVLIIGGGDGGVAQVLELYPDIKQIDIVEPDEMLVDVCRQYFPEFASGLDDDRVTIYHQDGLRFLRNCDSDYDIIINDATDPFGHTEGLFTKEFYGNSYRALKEDGIMIYQHGSPFFDEDESAFRSMHRKASQSFPISRVFQAHIPTVPSGYWCFGFASKKYHPIEDFKKEDWKARQLKTDYYSANLHLGAFSLPRYVEDILEEEEEK.

One can recognise a PABS domain in the interval 2-237 (DLWFSESHTP…GYWCFGFASK (236 aa)). Gln-31 lines the S-methyl-5'-thioadenosine pocket. Asp-86 provides a ligand contact to spermidine. Residues Glu-106 and 137 to 138 (DG) each bind S-methyl-5'-thioadenosine. The Proton acceptor role is filled by Asp-155.

The protein belongs to the spermidine/spermine synthase family. As to quaternary structure, homodimer or homotetramer.

It localises to the cytoplasm. The catalysed reaction is S-adenosyl 3-(methylsulfanyl)propylamine + putrescine = S-methyl-5'-thioadenosine + spermidine + H(+). It functions in the pathway amine and polyamine biosynthesis; spermidine biosynthesis; spermidine from putrescine: step 1/1. Functionally, catalyzes the irreversible transfer of a propylamine group from the amino donor S-adenosylmethioninamine (decarboxy-AdoMet) to putrescine (1,4-diaminobutane) to yield spermidine. The polypeptide is Polyamine aminopropyltransferase (Streptococcus uberis (strain ATCC BAA-854 / 0140J)).